The sequence spans 544 residues: MFS-type transporter prx5 (544 aa).

A disordered region spans residues 1–28 (MAVDTEKDSVQAGSPMETPGSPVDETTE). Transmembrane regions (helical) follow at residues 36–56 (WIVS…IPVV), 90–110 (LDHL…VASA), 116–136 (VIAG…AAFA), 148–168 (IGVV…PVTA), 178–198 (AWNF…LLFL), 221–241 (GAFL…WAGV), 249–269 (VVAP…WESF), 290–310 (FTAP…SSIL), 330–350 (VILS…LTCF), 361–381 (LTGS…VTPT), 387–407 (IAFI…SIAI), 418–438 (GVSG…ATSI), and 505–525 (AIFV…AACL).

The protein belongs to the major facilitator superfamily.

The protein localises to the cell membrane. Its function is as follows. MFS-type transporter; part of the gene cluster that mediates the biosynthesis of PR-toxin, a bicyclic sesquiterpene belonging to the eremophilane class and acting as a mycotoxin. The protein is MFS-type transporter prx5 of Penicillium rubens (strain ATCC 28089 / DSM 1075 / NRRL 1951 / Wisconsin 54-1255) (Penicillium chrysogenum).